The chain runs to 137 residues: S-protein homolog 16 (137 aa).

Positions 1 to 21 (MKNLLVFIFVFSLCMFDHVSG) are cleaved as a signal peptide. N-linked (GlcNAc...) asparagine glycosylation occurs at Asn87.

This sequence belongs to the plant self-incompatibility (S1) protein family.

The protein localises to the secreted. This chain is S-protein homolog 16, found in Arabidopsis thaliana (Mouse-ear cress).